The chain runs to 404 residues: AT-hook motif nuclear-localized protein 3 (404 aa).

Disordered stretches follow at residues 1-51 (MEER…VPPT), 70-100 (PFSL…PDGT), and 113-133 (SVPL…GKSN). The span at 7 to 19 (TNINNNITSSFGL) shows a compositional bias: polar residues. Over residues 35–51 (DPPPRPENPNPFLVPPT) the composition is skewed to pro residues. The segment covering 71–83 (FSLTMPTENTSAE) has biased composition (polar residues). Residues 86-94 (KKKRGRPRK) carry the Bipartite nuclear localization signal motif. A DNA-binding region (a.T hook) is located at residues 86–98 (KKKRGRPRKYNPD). A compositionally biased stretch (basic residues) spans 123 to 133 (RKRGRGRGKSN). The region spanning 163 to 308 (GANFTPHVLI…RFGAQPSSIS (146 aa)) is the PPC domain. The tract at residues 359–404 (PFSSIPVGGGGGGEVGEEEGEEDDDELEGEDEEFGGDSQSDNEIPS) is disordered. Residues 373–393 (VGEEEGEEDDDELEGEDEEFG) show a composition bias toward acidic residues.

As to quaternary structure, homodimer. Interacts with AHL4. As to expression, expressed in both procambium and xylem precursors of the root meristem. Also detected in the endodermis in the late elongation zone and onwards.

The protein resides in the nucleus. Functionally, transcription factor that specifically binds AT-rich DNA sequences related to the nuclear matrix attachment regions (MARs). Acts redundantly with AHL4 to regulate the formation of tissue boundary between the xylem and procambium in the root meristem. The sequence is that of AT-hook motif nuclear-localized protein 3 from Arabidopsis thaliana (Mouse-ear cress).